We begin with the raw amino-acid sequence, 490 residues long: Ent-kaurenoic acid oxidase 1 (490 aa).

Residues S6–V26 form a helical membrane-spanning segment. C439 is a heme binding site.

The protein belongs to the cytochrome P450 family. The cofactor is heme. Widely expressed. Highly expressed in influorescence stem, influorescence, and silique tissue. Weakly expressed in cauline and rosette leaves. Expressed at a higher level in stem and influorescence than AtKAO2/CYP88A4.

The protein resides in the endoplasmic reticulum membrane. The enzyme catalyses ent-kaur-16-en-19-oate + 3 reduced [NADPH--hemoprotein reductase] + 3 O2 = gibberellin A12 + 3 oxidized [NADPH--hemoprotein reductase] + 4 H2O + 4 H(+). It catalyses the reaction ent-kaur-16-en-19-oate + reduced [NADPH--hemoprotein reductase] + O2 = ent-7alpha-hydroxykaur-16-en-19-oate + oxidized [NADPH--hemoprotein reductase] + H2O + H(+). The catalysed reaction is ent-7alpha-hydroxykaur-16-en-19-oate + reduced [NADPH--hemoprotein reductase] + O2 = gibberellin A12 aldehyde + oxidized [NADPH--hemoprotein reductase] + 2 H2O + H(+). It carries out the reaction gibberellin A12 aldehyde + reduced [NADPH--hemoprotein reductase] + O2 = gibberellin A12 + oxidized [NADPH--hemoprotein reductase] + H2O + 2 H(+). The protein operates within plant hormone biosynthesis; gibberellin biosynthesis. Functionally, catalyzes three successive oxidations of ent-kaurenoic acid giving gibberellin 12 (GA12), a key step in gibberellins (GAs) biosynthesis. GAs, which are involved many processes, including stem elongation, play a central role in plant development. This chain is Ent-kaurenoic acid oxidase 1, found in Arabidopsis thaliana (Mouse-ear cress).